A 1419-amino-acid polypeptide reads, in one-letter code: Collagen alpha-1(II) chain (1419 aa).

The signal sequence occupies residues 1–25 (MIRLGAPQSLVLLTLLIATVLQCQG). A propeptide spans 26 to 113 (QDARKLGPKG…PGLGGGNFAA (88 aa)) (N-terminal propeptide). A disordered region spans residues 28–1168 (ARKLGPKGQK…GQREKGPDPL (1141 aa)). 2 stretches are compositionally biased toward basic and acidic residues: residues 36–47 (QKGEPGDIKDII) and 64–85 (PRGD…RDGE). Positions 89-104 (PGNPGPPGPPGPPGPP) are enriched in pro residues. Lys122 carries the post-translational modification 5-hydroxylysine. O-linked (Gal...) hydroxylysine glycosylation is present at Lys122. The span at 124 to 135 (GGAQMGVMQGPM) shows a compositional bias: low complexity. Positions 133 to 1146 (GPMGPMGPRG…PGPPGPPGPP (1014 aa)) are triple-helical region. Positions 140–149 (PRGPPGPAGA) are enriched in pro residues. Positions 150 to 171 (PGPQGFQGNPGEPGEPGVSGPI) are enriched in low complexity. A compositionally biased stretch (basic and acidic residues) spans 183–197 (PGDDGEAGKPGKAGE). Residues Lys219, Lys231, and Lys240 each carry the 5-hydroxylysine modification. Lys219, Lys231, and Lys240 each carry an O-linked (Gal...) hydroxylysine glycan. Composition is skewed to low complexity over residues 242-252 (ESGSPGENGSP) and 267-282 (TGPA…DGQP). Residues 292 to 301 (GPAGGPGFLG) show a composition bias toward gly residues. At Lys306 the chain carries 5-hydroxylysine. The O-linked (Gal...) hydroxylysine glycan is linked to Lys306. Over residues 335–363 (PAGASGNPGTDGIPGAKGSAGAPGIAGAP) the composition is skewed to low complexity. Residues 365–374 (FPGPRGPPGP) are compositionally biased toward pro residues. The span at 404-417 (ETGPAGPQGAPGPA) shows a compositional bias: low complexity. A 5-hydroxylysine mark is found at Lys540 and Lys552. O-linked (Gal...) hydroxylysine glycosylation is found at Lys540 and Lys552. The segment covering 554 to 563 (LAGAPGLRGL) has biased composition (low complexity). Residues Pro591 and Pro600 each carry the 4-hydroxyproline modification. Residue Pro602 is modified to 3-hydroxyproline; partial. 4-hydroxyproline is present on residues Pro603 and Pro606. Positions 638-668 (ERGSPGAQGLQGPRGLPGTPGTDGPKGAAGP) are enriched in low complexity. Over residues 696–707 (KGDRGDVGEKGP) the composition is skewed to basic and acidic residues. Composition is skewed to low complexity over residues 765–780 (AGFA…PGAK) and 809–846 (PTGV…NGNP). At Pro839 the chain carries 3-hydroxyproline; partial. 4-hydroxyproline occurs at positions 840, 846, and 852. A compositionally biased stretch (pro residues) spans 1001–1011 (APGPPGSPGPA). The segment covering 1047 to 1061 (RGDKGEAGEPGERGL) has biased composition (basic and acidic residues). 3-hydroxyproline; partial is present on Pro1076. Composition is skewed to low complexity over residues 1080-1089 (SGDQGTSGPA) and 1103-1113 (PSGKDGSNGIP). Pro1113 bears the 4-hydroxyproline mark. Position 1118 is a 3-hydroxyproline (Pro1118). Residue Pro1119 is modified to 4-hydroxyproline. Over residues 1131 to 1148 (AGPPGNPGPPGPPGPPGP) the composition is skewed to pro residues. 3-hydroxyproline; partial is present on Pro1133. 4-hydroxyproline occurs at positions 1134 and 1137. Pro1139 carries the 3-hydroxyproline; partial modification. 2 positions are modified to 4-hydroxyproline: Pro1140 and Pro1143. Pro1145 is subject to 3-hydroxyproline; partial. Pro1146 bears the 4-hydroxyproline mark. A nonhelical region (C-terminal) region spans residues 1147-1173 (GPGIDMSAFAGLGQREKGPDPLQYMRA). The region spanning 1185–1419 (VEVDATLKSL…GVDIGPVCFL (235 aa)) is the Fibrillar collagen NC1 domain. Cystine bridges form between Cys1215/Cys1247, Cys1255/Cys1417, and Cys1325/Cys1370. Asp1233, Asn1235, Gln1236, Cys1238, and Asp1241 together coordinate Ca(2+). Asn1320 carries N-linked (GlcNAc...) asparagine glycosylation.

It belongs to the fibrillar collagen family. Homotrimers of alpha 1(II) chains. Contains mostly 4-hydroxyproline. Prolines at the third position of the tripeptide repeating unit (G-X-P) are 4-hydroxylated in some or all of the chains. Post-translationally, contains 3-hydroxyproline at a few sites. This modification occurs on the first proline residue in the sequence motif Gly-Pro-Hyp, where Hyp is 4-hydroxyproline. In terms of processing, lysine residues at the third position of the tripeptide repeating unit (G-X-Y) are 5-hydroxylated in some or all of the chains. O-glycosylated on hydroxylated lysine residues. The O-linked glycan consists of a Glc-Gal disaccharide. Expressed in chondrocytes.

It localises to the secreted. The protein localises to the extracellular space. It is found in the extracellular matrix. Functionally, type II collagen is specific for cartilaginous tissues. It is essential for the normal embryonic development of the skeleton, for linear growth and for the ability of cartilage to resist compressive forces. In Rattus norvegicus (Rat), this protein is Collagen alpha-1(II) chain.